Here is a 439-residue protein sequence, read N- to C-terminus: 3-phosphoshikimate 1-carboxyvinyltransferase (439 aa).

Residues Lys-31, Ser-32, and Arg-36 each coordinate 3-phosphoshikimate. Position 31 (Lys-31) interacts with phosphoenolpyruvate. Phosphoenolpyruvate contacts are provided by Gly-103 and Arg-131. Ser-175, Gln-177, Asp-322, and Lys-349 together coordinate 3-phosphoshikimate. Gln-177 is a binding site for phosphoenolpyruvate. Residue Asp-322 is the Proton acceptor of the active site. Arg-353 and Arg-397 together coordinate phosphoenolpyruvate.

Belongs to the EPSP synthase family. Monomer.

Its subcellular location is the cytoplasm. It carries out the reaction 3-phosphoshikimate + phosphoenolpyruvate = 5-O-(1-carboxyvinyl)-3-phosphoshikimate + phosphate. The protein operates within metabolic intermediate biosynthesis; chorismate biosynthesis; chorismate from D-erythrose 4-phosphate and phosphoenolpyruvate: step 6/7. In terms of biological role, catalyzes the transfer of the enolpyruvyl moiety of phosphoenolpyruvate (PEP) to the 5-hydroxyl of shikimate-3-phosphate (S3P) to produce enolpyruvyl shikimate-3-phosphate and inorganic phosphate. The chain is 3-phosphoshikimate 1-carboxyvinyltransferase from Clostridium tetani (strain Massachusetts / E88).